The chain runs to 799 residues: 1,4-alpha-glucan-branching enzyme 2, chloroplastic/amyloplastic (799 aa).

The N-terminal 57 residues, 1–57, are a transit peptide targeting the chloroplast; it reads MAFRVSGAVLGGAVRAPRLTGGGEGSLVFRHTGLFLTRGARVGCSGTHGAMRAAAAA. (1,4-alpha-D-glucosyl)n-binding residues include Trp196 and Lys232. The active-site Nucleophile is the Asp447. Catalysis depends on Glu502, which acts as the Proton donor.

Belongs to the glycosyl hydrolase 13 family. GlgB subfamily. In terms of assembly, monomer.

The protein resides in the plastid. It localises to the chloroplast. Its subcellular location is the amyloplast. The catalysed reaction is Transfers a segment of a (1-&gt;4)-alpha-D-glucan chain to a primary hydroxy group in a similar glucan chain.. It participates in glycan biosynthesis; starch biosynthesis. Functionally, catalyzes the formation of the alpha-1,6-glucosidic linkages in starch by scission of a 1,4-alpha-linked oligosaccharide from growing alpha-1,4-glucan chains and the subsequent attachment of the oligosaccharide to the alpha-1,6 position. This is 1,4-alpha-glucan-branching enzyme 2, chloroplastic/amyloplastic (SBE1) from Zea mays (Maize).